Reading from the N-terminus, the 326-residue chain is ATP-dependent 6-phosphofructokinase 2 (326 aa).

Residue glycine 14 participates in ATP binding. An ADP-binding site is contributed by 24–28 (RAVTR). Residues 75–76 (RC) and 105–108 (GDGS) contribute to the ATP site. Aspartate 106 provides a ligand contact to Mg(2+). Position 129–131 (129–131 (TID)) interacts with substrate. The Proton acceptor role is filled by aspartate 131. Arginine 158 serves as a coordination point for ADP. Substrate contacts are provided by residues arginine 166 and 173 to 175 (MGR). ADP contacts are provided by residues 189 to 191 (GAE), lysine 215, and 217 to 219 (KNS). Residues glutamate 226, arginine 250, and 256–259 (HLQR) contribute to the substrate site.

It belongs to the phosphofructokinase type A (PFKA) family. ATP-dependent PFK group I subfamily. Prokaryotic clade 'B1' sub-subfamily. As to quaternary structure, homotetramer. The cofactor is Mg(2+).

Its subcellular location is the cytoplasm. The enzyme catalyses beta-D-fructose 6-phosphate + ATP = beta-D-fructose 1,6-bisphosphate + ADP + H(+). The protein operates within carbohydrate degradation; glycolysis; D-glyceraldehyde 3-phosphate and glycerone phosphate from D-glucose: step 3/4. With respect to regulation, allosterically activated by ADP and other diphosphonucleosides, and allosterically inhibited by phosphoenolpyruvate. Catalyzes the phosphorylation of D-fructose 6-phosphate to fructose 1,6-bisphosphate by ATP, the first committing step of glycolysis. This chain is ATP-dependent 6-phosphofructokinase 2, found in Bacteroides thetaiotaomicron (strain ATCC 29148 / DSM 2079 / JCM 5827 / CCUG 10774 / NCTC 10582 / VPI-5482 / E50).